A 333-amino-acid chain; its full sequence is Probable G-protein coupled receptor 174 (333 aa).

Residues 1–27 are Extracellular-facing; it reads MPANYTCTRPDGDNTDFRYFIYAVTYT. Asparagine 4 is a glycosylation site (N-linked (GlcNAc...) asparagine). The chain crosses the membrane as a helical span at residues 28–48; that stretch reads VILVPGLIGNILALWVFYGYM. Residues 49-53 lie on the Cytoplasmic side of the membrane; the sequence is KETKR. A helical membrane pass occupies residues 54–74; sequence AVIFMINLAIADLLQVLSLPL. Residues 75 to 91 lie on the Extracellular side of the membrane; it reads RIFYYLNHDWPFGPGLC. The cysteines at positions 91 and 168 are disulfide-linked. Residues 92–112 form a helical membrane-spanning segment; that stretch reads MFCFYLKYVNMYASIYFLVCI. At 113–134 the chain is on the cytoplasmic side; it reads SVRRFWFLMYPFRFHDCKQKYD. Residues 135–155 form a helical membrane-spanning segment; sequence LYISIAGWLIICLACVLFPLL. Topologically, residues 156–182 are extracellular; it reads RTSDDTSGNRTKCFVDLPTRNVNLAQS. A glycan (N-linked (GlcNAc...) asparagine) is linked at asparagine 164. The chain crosses the membrane as a helical span at residues 183 to 203; the sequence is VVMMTIGELIGFVTPLLIVLY. Topologically, residues 204 to 231 are cytoplasmic; it reads CTWKTVLSLQDKYPMAQDLGEKQKALKM. A helical membrane pass occupies residues 232 to 252; it reads ILTCAGVFLICFAPYHFSFPL. Residues 253-269 lie on the Extracellular side of the membrane; it reads DFLVKSNEIKSCLARRV. A helical transmembrane segment spans residues 270–290; that stretch reads ILIFHSVALCLASLNSCLDPV. The Cytoplasmic segment spans residues 291 to 333; it reads IYYFSTNEFRRRLSRQDLHDSIQLHAKSFVSNHTASTMTPELC.

This sequence belongs to the G-protein coupled receptor 1 family. In terms of assembly, interacts with GNA13. Interacts with CCL21.

Its subcellular location is the cell membrane. In terms of biological role, G-protein-coupled receptor of lysophosphatidylserine (LysoPS) that plays different roles in immune response. Plays a negative role in regulatory T-cell accumulation and homeostasis. Under inflammatory conditions where LysoPS production increases, contributes to the down-regulation of regulatory T-cell activity to favor effector response. Mediates the suppression of IL-2 production in activated T-lymphocytes leading to inhibition of growth, proliferation and differentiation of T-cells. Mechanistically, acts via G(s)-containing heterotrimeric G proteins to trigger elevated cyclic AMP levels and protein kinase A/PKA activity, which may in turn act to antagonize proximal TCR signaling. Plays an important role in the initial period of sepsis through the regulation of macrophage polarization and pro- and anti-inflammatory cytokine secretions. Upon testosterone treatment, acts as a receptor for CCL21 and subsequently triggers through G(q)-alpha and G(12)/G(13) proteins a calcium flux leading to chemotactic effects on activated B-cells. Signals via GNA13 and PKA to promote CD86 up-regulation by follicular B-cells. The sequence is that of Probable G-protein coupled receptor 174 (GPR174) from Homo sapiens (Human).